The primary structure comprises 1331 residues: ABC multidrug transporter MDR2 (1331 aa).

2 stretches are compositionally biased toward basic and acidic residues: residues M1–N20 and S31–N41. The segment at M1–E51 is disordered. 4 helical membrane-spanning segments follow: residues M93–F113, Y147–I167, K219–V239, and W242–I262. The region spanning A97 to S387 is the ABC transmembrane type-1 1 domain. Residue N293 is glycosylated (N-linked (GlcNAc...) asparagine). The next 2 helical transmembrane spans lie at L325 to W345 and L358 to V378. The 246-residue stretch at I422 to A667 folds into the ABC transporter 1 domain. G457–S464 is a binding site for ATP. N-linked (GlcNAc...) asparagine glycosylation occurs at N529. 2 helical membrane-spanning segments follow: residues L762–F782 and F810–I830. The ABC transmembrane type-1 2 domain occupies G764–K1051. N-linked (GlcNAc...) asparagine glycosylation is present at N860. A run of 4 helical transmembrane segments spans residues L884–F904, L910–L930, A995–L1015, and F1025–F1045. One can recognise an ABC transporter 2 domain in the interval I1086 to M1324. N1108 carries N-linked (GlcNAc...) asparagine glycosylation. G1121–S1128 contacts ATP.

This sequence belongs to the ABC transporter superfamily. ABCB family. Multidrug resistance exporter (TC 3.A.1.201) subfamily.

The protein localises to the cell membrane. It catalyses the reaction itraconazole(in) + ATP + H2O = itraconazole(out) + ADP + phosphate + H(+). Its function is as follows. Pleiotropic ABC efflux transporter that may be involved in the modulation susceptibility to a wide range of unrelated cytotoxic compounds, including terbinafine, 4-nitroquinoline N-oxide, and ethidium bromide. May play a role in pathogenicity. The polypeptide is ABC multidrug transporter MDR2 (Trichophyton interdigitale (strain MR816)).